A 149-amino-acid chain; its full sequence is Flagellar assembly factor FliW (149 aa).

This sequence belongs to the FliW family. In terms of assembly, interacts with translational regulator CsrA and flagellin(s).

It localises to the cytoplasm. Functionally, acts as an anti-CsrA protein, binds CsrA and prevents it from repressing translation of its target genes, one of which is flagellin. Binds to flagellin and participates in the assembly of the flagellum. The polypeptide is Flagellar assembly factor FliW (Thermotoga petrophila (strain ATCC BAA-488 / DSM 13995 / JCM 10881 / RKU-1)).